The following is a 147-amino-acid chain: Large ribosomal subunit protein uL15 (147 aa).

The tract at residues 1-62 (MDLNTLKPAL…GQMPLQRRLP (62 aa)) is disordered. Residues 30-39 (TATKGHKGQK) show a composition bias toward basic residues.

Belongs to the universal ribosomal protein uL15 family. In terms of assembly, part of the 50S ribosomal subunit.

Its function is as follows. Binds to the 23S rRNA. The chain is Large ribosomal subunit protein uL15 from Pelobacter propionicus (strain DSM 2379 / NBRC 103807 / OttBd1).